The following is a 126-amino-acid chain: Integrin alpha-M (126 aa).

3 N-linked (GlcNAc...) asparagine glycosylation sites follow: Asn25, Asn78, and Asn106.

It belongs to the integrin alpha chain family. Heterodimer of an alpha and a beta chain. ITGAM associates with ITGB2. Found in a complex with CD177 and ITGB2/CD18. Interacts with JAM3. Interacts with THBD. Interacts with TMEM268; this interaction inhibits ITGAM degradation via the endosome-lysosome pathway.

It localises to the cell membrane. It is found in the membrane raft. Functionally, integrin ITGAM/ITGB2 is implicated in various adhesive interactions of monocytes, macrophages and granulocytes as well as in mediating the uptake of complement-coated particles. It is identical with CR-3, the receptor for the iC3b fragment of the third complement component. It probably recognizes the R-G-D peptide in C3b. Integrin ITGAM/ITGB2 is also a receptor for fibrinogen, factor X and ICAM1. It recognizes P1 and P2 peptides of fibrinogen gamma chain. Regulates neutrophil migration. In association with beta subunit ITGB2/CD18, required for CD177-PRTN3-mediated activation of TNF primed neutrophils. May regulate phagocytosis-induced apoptosis in extravasated neutrophils. May play a role in mast cell development. Required with TYROBP/DAP12 in microglia to control production of microglial superoxide ions which promote the neuronal apoptosis that occurs during brain development. This is Integrin alpha-M (ITGAM) from Cavia porcellus (Guinea pig).